The sequence spans 346 residues: Enkurin domain-containing protein 1 (346 aa).

The tract at residues 1–35 (MCEGPSRISGPIPPDPTLCPDNYRRPTSAQGRLEG) is disordered. Ser-91 carries the phosphoserine modification. The required for binding to microtubules stretch occupies residues 91–171 (SLKRKDPKDH…AHFLRAHSRC (81 aa)). Positions 114 to 125 (RFREQERSREQG) are enriched in basic and acidic residues. Disordered stretches follow at residues 114 to 137 (RFREQERSREQGQPRPLKALWRSP), 167 to 197 (AHSRCGPGLPPPHVSSPQPTPPGPEAKEPGL), and 260 to 280 (AEARKQSQPDPAMPPGHTRMP). Phosphoserine is present on Ser-136. The segment covering 174–190 (GLPPPHVSSPQPTPPGP) has biased composition (pro residues). The Enkurin domain maps to 251–343 (ERRDLWRREA…IFSRPKVFVK (93 aa)).

Interacts with alpha-tubulin. Interacts (via central region) with CCP110 (via N-terminal region); competes with CEP97 for binding to CCP110.

It localises to the cytoplasm. The protein resides in the cytoskeleton. Its subcellular location is the microtubule organizing center. It is found in the centrosome. The protein localises to the centriole. It localises to the cilium basal body. The protein resides in the cell projection. Its subcellular location is the cilium. It is found in the spindle. The protein localises to the spindle pole. It localises to the cilium axoneme. Its function is as follows. Microtubule-binding protein which regulates microtubule organization and stability. Promotes the stability of astral microtubules and facilitates the proper orientation of the mitotic spindle. This allows the oriented division of basal keratinocytes and contributes to epidermal stratification. Required for the assembly of both primary and motile cilia. Destabilizes the interaction between CCP110 and CEP97 by competing with CEP97 for binding to CCP110 which promotes the removal of CCP110 and CEP97 from the mother centriole and allows the initiation of ciliogenesis. This chain is Enkurin domain-containing protein 1 (ENKD1), found in Homo sapiens (Human).